A 487-amino-acid polypeptide reads, in one-letter code: Probable peptidoglycan glycosyltransferase FtsW (487 aa).

The next 9 membrane-spanning stretches (helical) occupy residues 30 to 50, 71 to 91, 93 to 113, 122 to 142, 167 to 187, 203 to 223, 282 to 302, 332 to 352, and 358 to 378; these read VSLI…VTSA, IYIV…MQWW, TSNA…LLVG, WLAI…FFFC, VVFF…TVVV, LWQF…LIMF, FIMA…VLAL, IGIW…GILP, and FPLL…VGLL. 2 disordered regions span residues 398–419 and 444–487; these read KAKA…SAGK and IDSI…DGYV. Residues 401 to 416 show a composition bias toward polar residues; the sequence is ASTSSSRKNKPKTASS. The segment covering 444-453 has biased composition (acidic residues); that stretch reads IDSIMDDFAQ.

It belongs to the SEDS family. FtsW subfamily.

The protein resides in the cell inner membrane. It carries out the reaction [GlcNAc-(1-&gt;4)-Mur2Ac(oyl-L-Ala-gamma-D-Glu-L-Lys-D-Ala-D-Ala)](n)-di-trans,octa-cis-undecaprenyl diphosphate + beta-D-GlcNAc-(1-&gt;4)-Mur2Ac(oyl-L-Ala-gamma-D-Glu-L-Lys-D-Ala-D-Ala)-di-trans,octa-cis-undecaprenyl diphosphate = [GlcNAc-(1-&gt;4)-Mur2Ac(oyl-L-Ala-gamma-D-Glu-L-Lys-D-Ala-D-Ala)](n+1)-di-trans,octa-cis-undecaprenyl diphosphate + di-trans,octa-cis-undecaprenyl diphosphate + H(+). It participates in cell wall biogenesis; peptidoglycan biosynthesis. In terms of biological role, peptidoglycan polymerase that is essential for cell division. In Pseudoalteromonas atlantica (strain T6c / ATCC BAA-1087), this protein is Probable peptidoglycan glycosyltransferase FtsW.